A 179-amino-acid chain; its full sequence is Large ribosomal subunit protein uL5 (179 aa).

This sequence belongs to the universal ribosomal protein uL5 family. In terms of assembly, part of the 50S ribosomal subunit; part of the 5S rRNA/L5/L18/L25 subcomplex. Contacts the 5S rRNA and the P site tRNA. Forms a bridge to the 30S subunit in the 70S ribosome.

Its function is as follows. This is one of the proteins that bind and probably mediate the attachment of the 5S RNA into the large ribosomal subunit, where it forms part of the central protuberance. In the 70S ribosome it contacts protein S13 of the 30S subunit (bridge B1b), connecting the 2 subunits; this bridge is implicated in subunit movement. Contacts the P site tRNA; the 5S rRNA and some of its associated proteins might help stabilize positioning of ribosome-bound tRNAs. The sequence is that of Large ribosomal subunit protein uL5 from Nitrosomonas europaea (strain ATCC 19718 / CIP 103999 / KCTC 2705 / NBRC 14298).